The chain runs to 233 residues: Superoxide dismutase [Mn] 3.4, mitochondrial (233 aa).

A mitochondrion-targeting transit peptide spans 1 to 29 (MALRTLASKNALSFALGGAARPSAASARG). 4 residues coordinate Mn(2+): histidine 57, histidine 105, aspartate 194, and histidine 198.

Belongs to the iron/manganese superoxide dismutase family. As to quaternary structure, homotetramer. Mn(2+) is required as a cofactor.

It is found in the mitochondrion matrix. It catalyses the reaction 2 superoxide + 2 H(+) = H2O2 + O2. In terms of biological role, destroys superoxide anion radicals which are normally produced within the cells and which are toxic to biological systems. This is Superoxide dismutase [Mn] 3.4, mitochondrial (SODA.3) from Zea mays (Maize).